The following is a 432-amino-acid chain: Glutamate-1-semialdehyde 2,1-aminomutase 2 (432 aa).

An N6-(pyridoxal phosphate)lysine modification is found at Lys268.

Belongs to the class-III pyridoxal-phosphate-dependent aminotransferase family. HemL subfamily. In terms of assembly, homodimer. It depends on pyridoxal 5'-phosphate as a cofactor.

The protein resides in the cytoplasm. It carries out the reaction (S)-4-amino-5-oxopentanoate = 5-aminolevulinate. The protein operates within porphyrin-containing compound metabolism; protoporphyrin-IX biosynthesis; 5-aminolevulinate from L-glutamyl-tRNA(Glu): step 2/2. In Listeria welshimeri serovar 6b (strain ATCC 35897 / DSM 20650 / CCUG 15529 / CIP 8149 / NCTC 11857 / SLCC 5334 / V8), this protein is Glutamate-1-semialdehyde 2,1-aminomutase 2.